The sequence spans 113 residues: Insulin-like peptide 02 (113 aa).

The N-terminal stretch at M1 to P22 is a signal peptide. The propeptide occupies V23–R42. Intrachain disulfides connect C44-C99, C56-C112, and C98-C103. A propeptide spans R62–R87 (c peptide).

It belongs to the insulin family.

The protein resides in the secreted. Functionally, insulin decreases blood glucose concentration. May have evolved to activate insulin receptors (INSR) in vertebrates. Molecular docking studies reveals unique interaction with the human insulin receptor. In vivo, insulin-like peptide injection reduces blood glucose levels in two models of zebrafish diabetes (streptozotocin- and glucose-induced). Also shorter swimming distance of zebrafish larvae, an effect which is not observed with human insulin. The polypeptide is Insulin-like peptide 02 (Exaiptasia diaphana (Tropical sea anemone)).